Reading from the N-terminus, the 1010-residue chain is ATP-dependent DNA/RNA helicase DHX36 (1010 aa).

The segment at 1–54 (MSYDYHQNWGRDGGPRSSGGGYGGSYGGSHGGGHGGNRGSGGGGGGGGGRGGRG) is required for recruitment to cytoplasmic stress granules. The tract at residues 1-63 (MSYDYHQNWG…GRHPGHLKGR (63 aa)) is disordered. Positions 1–107 (MSYDYHQNWG…IVQLLHSVQT (107 aa)) are required for the pre-miR-134 transport. A necessary for nuclear and nucleolar caps localizations region spans residues 1–202 (MSYDYHQNWG…KKTDLRYIEM (202 aa)). Residues 16–51 (RSSGGGYGGSYGGSHGGGHGGNRGSGGGGGGGGGRG) are compositionally biased toward gly residues. Residues 56–78 (HPGHLKGREIGLWYAKKQGQKNK) are DSM (DHX36-specific motif). The interval 56-108 (HPGHLKGREIGLWYAKKQGQKNKEAERQERAVVHMDERREEQIVQLLHSVQTK) is required for G4-DNA- and G4-RNA-binding. RecA-like domain regions lie at residues 109–388 (NDKD…MIHI) and 389–630 (PGFT…DYQL). Residues 219-389 (VNMIDNHQVT…FGNCPMIHIP (171 aa)) enclose the Helicase ATP-binding domain. Position 235 to 240 (235 to 240 (GCGKTT)) interacts with ATP. The necessary for interaction with single-stranded DNA at the 3'-end of the G4-DNA structure stretch occupies residues 267–319 (RRISAISVAERVAAERAESCGNGNSTGYQIRLQSRLPRKQGSILYCTTGIILQ). Residues 336 to 339 (DEIH) carry the DEAH box motif. Mg(2+) is bound by residues Glu-337 and His-339. The Helicase C-terminal domain occupies 479–649 (ALIRYIVLEE…ELCLQIKILR (171 aa)). Residues 500–559 (WDNISTLHDLLMSQVMFKSDKFIIIPLHSLMPTVNQTQVFKRTPPGVRKIVIATNIAETS) are necessary for interaction with single-stranded DNA at the 3'-end of the G4-DNA structure. The short motif at 519 to 530 (DKFIIIPLHSLM) is the Nuclear localization signal element. ATP contacts are provided by residues Ser-559 and 604 to 607 (RAGR). Residues 631–700 (PEILRTPLEE…LGVHLARLPV (70 aa)) are WH domain. Necessary for interaction with single-stranded DNA at the 3'-end of the G4-DNA structure regions lie at residues 640-699 (ELCL…ARLP), 851-862 (NLGKKRKMVKVY), and 872-902 (HPKS…IYLY). The tract at residues 843–907 (PKVAKIRLNL…SIYLYDCTEV (65 aa)) is OB-fold-like subdomains. An N6-acetyllysine modification is found at Lys-949. The residue at position 965 (Ser-965) is a Phosphoserine.

As to quaternary structure, found in a multi-helicase-TICAM1 complex at least composed of DHX36, DDX1, DDX21 and TICAM1; this complex exists in resting cells with or without dsRNA poly(I:C) ligand stimulation. Interacts (via C-terminus) with TICAM1 (via TIR domain). Interacts (via C-terminus) with DDX21; this interaction serves as bridges to TICAM1. Interacts with TERT; this interaction is dependent on the ability of DHX36 to bind to the G-quadruplex RNA (G4-RNA) structure present in the telomerase RNA template component (TERC). Interacts with DKC1; this interaction is dependent on the ability of DHX36 to bind to the G4-RNA structure present in TERC. Interacts with PARN; this interaction stimulates PARN to enhance uPA mRNA decay. Interacts with EXOSC3; this interaction occurs in a RNase-insensitive manner. Interacts with EXOSC10; this interaction occurs in a RNase-insensitive manner. Interacts with ILF3; this interaction occurs in a RNA-dependent manner. Interacts with ELAVL1; this interaction occurs in an RNA-dependent manner. Interacts with DDX5; this interaction occurs in a RNA-dependent manner. Interacts with DDX17; this interaction occurs in a RNA-dependent manner. Interacts with HDAC1; this interaction occurs in a RNA-dependent manner. Interacts with HDAC3; this interaction occurs in a RNA-dependent manner. Interacts with HDAC4. Interacts with AGO1. Interacts with AGO2. Interacts with ERCC6. Requires Mg(2+) as cofactor.

It is found in the nucleus. The protein resides in the cytoplasm. Its subcellular location is the cytosol. The protein localises to the stress granule. It localises to the nucleus speckle. It is found in the chromosome. The protein resides in the telomere. Its subcellular location is the mitochondrion. The protein localises to the perikaryon. It localises to the cell projection. It is found in the dendrite. The protein resides in the axon. The enzyme catalyses ATP + H2O = ADP + phosphate + H(+). With respect to regulation, ATPase activity is enhanced in the presence of homomeric poly(U) RNAs, but not by double-stranded DNA (dsDNA), double-stranded RNA (dsRNA) and tRNA. Its function is as follows. Multifunctional ATP-dependent helicase that unwinds G-quadruplex (G4) structures. Plays a role in many biological processes such as genomic integrity, gene expression regulations and as a sensor to initiate antiviral responses. G4 structures correspond to helical structures containing guanine tetrads. Binds with high affinity to and unwinds G4 structures that are formed in nucleic acids (G4-DNA and G4-RNA). Plays a role in genomic integrity. Converts the G4-RNA structure present in telomerase RNA template component (TREC) into a double-stranded RNA to promote P1 helix formation that acts as a template boundary ensuring accurate reverse transcription. Plays a role in transcriptional regulation. Resolves G4-DNA structures in promoters of genes, such as YY1, KIT/c-kit and ALPL and positively regulates their expression. Plays a role in post-transcriptional regulation. Unwinds a G4-RNA structure located in the 3'-UTR polyadenylation site of the pre-mRNA TP53 and stimulates TP53 pre-mRNA 3'-end processing in response to ultraviolet (UV)-induced DNA damage. Binds to the precursor-microRNA-134 (pre-miR-134) terminal loop and regulates its transport into the synapto-dendritic compartment. Involved in the pre-miR-134-dependent inhibition of target gene expression and the control of dendritic spine size. Plays a role in the regulation of cytoplasmic mRNA translation and mRNA stability. Binds to both G4-RNA structures and alternative non-quadruplex-forming sequence within the 3'-UTR of the PITX1 mRNA regulating negatively PITX1 protein expression. Binds to both G4-RNA structure in the 5'-UTR and AU-rich elements (AREs) localized in the 3'-UTR of NKX2-5 mRNA to either stimulate protein translation or induce mRNA decay in an ELAVL1-dependent manner, respectively. Also binds to ARE sequences present in several mRNAs mediating exosome-mediated 3'-5' mRNA degradation. Involved in cytoplasmic urokinase-type plasminogen activator (uPA) mRNA decay. Component of a multi-helicase-TICAM1 complex that acts as a cytoplasmic sensor of viral double-stranded RNA (dsRNA) and plays a role in the activation of a cascade of antiviral responses including the induction of pro-inflammatory cytokines via the adapter molecule TICAM1. Required for the early embryonic development and hematopoiesis. Involved in the regulation of cardioblast differentiation and proliferation during heart development. Involved in spermatogonia differentiation. May play a role in ossification. The protein is ATP-dependent DNA/RNA helicase DHX36 of Bos taurus (Bovine).